A 283-amino-acid polypeptide reads, in one-letter code: Cyclin-C (283 aa).

Residues 20 to 151 form the Cyclin N-terminal domain; sequence DLLKERQKDL…LLELMDCCLI (132 aa). A disordered region spans residues 252 to 283; sequence TILSKMPKPKPPPNSEGEQGPNGSQNSSYSQS. The span at 272-283 shows a compositional bias: polar residues; the sequence is PNGSQNSSYSQS. Ser-275 is subject to Phosphoserine.

Belongs to the cyclin family. Cyclin C subfamily. Component of the Mediator complex, which is composed of MED1, MED4, MED6, MED7, MED8, MED9, MED10, MED11, MED12, MED13, MED13L, MED14, MED15, MED16, MED17, MED18, MED19, MED20, MED21, MED22, MED23, MED24, MED25, MED26, MED27, MED29, MED30, MED31, CCNC, CDK8 and CDC2L6/CDK11. The MED12, MED13, CCNC and CDK8 subunits form a distinct module termed the CDK8 module. Mediator containing the CDK8 module is less active than Mediator lacking this module in supporting transcriptional activation. Individual preparations of the Mediator complex lacking one or more distinct subunits have been variously termed ARC, CRSP, DRIP, PC2, SMCC and TRAP. The cylin/CDK pair formed by CCNC/CDK8 also associates with the large subunit of RNA polymerase II.

The protein resides in the nucleus. Its function is as follows. Component of the Mediator complex, a coactivator involved in regulated gene transcription of nearly all RNA polymerase II-dependent genes. Mediator functions as a bridge to convey information from gene-specific regulatory proteins to the basal RNA polymerase II transcription machinery. Mediator is recruited to promoters by direct interactions with regulatory proteins and serves as a scaffold for the assembly of a functional preinitiation complex with RNA polymerase II and the general transcription factors. Binds to and activates cyclin-dependent kinase CDK8 that phosphorylates the CTD (C-terminal domain) of the large subunit of RNA polymerase II (RNAp II), which may inhibit the formation of a transcription initiation complex. In Mus musculus (Mouse), this protein is Cyclin-C (Ccnc).